The chain runs to 445 residues: Rab GDP dissociation inhibitor beta (445 aa).

An N-acetylmethionine modification is found at Met1. At Lys57 the chain carries N6-succinyllysine. Lys112 is subject to N6-acetyllysine. The residue at position 130 (Ser130) is a Phosphoserine. The residue at position 269 (Lys269) is an N6-acetyllysine. Residue Ser382 is modified to Phosphoserine.

It belongs to the Rab GDI family. Interacts with RHOH. Interacts with the GDP-bound inactive forms of RAB3A, RAB3B, RAB3C, RAB5A, RAB5B, RAB5C, RAB8A, RAB8B, RAB10, RAB12, RAB35, and RAB43; binds RAB3D to a lesser extent. Interacts with DZIP1; this interaction negatively regulates the interaction of GDI2 with GDP-bound RAB8A.

The protein localises to the cytoplasm. Its subcellular location is the membrane. It is found in the golgi apparatus. The protein resides in the trans-Golgi network. In terms of biological role, GDP-dissociation inhibitor preventing the GDP to GTP exchange of most Rab proteins. By keeping these small GTPases in their inactive GDP-bound form regulates intracellular membrane trafficking. Negatively regulates protein transport to the cilium and ciliogenesis through the inhibition of RAB8A. The polypeptide is Rab GDP dissociation inhibitor beta (GDI2) (Pongo abelii (Sumatran orangutan)).